A 189-amino-acid polypeptide reads, in one-letter code: Elongation factor P (189 aa).

An N6-(3,6-diaminohexanoyl)-5-hydroxylysine modification is found at lysine 34.

It belongs to the elongation factor P family. Post-translationally, may be beta-lysylated on the epsilon-amino group of Lys-34 by the combined action of EpmA and EpmB, and then hydroxylated on the C5 position of the same residue by EpmC (if this protein is present). Lysylation is critical for the stimulatory effect of EF-P on peptide-bond formation. The lysylation moiety may extend toward the peptidyltransferase center and stabilize the terminal 3-CCA end of the tRNA. Hydroxylation of the C5 position on Lys-34 may allow additional potential stabilizing hydrogen-bond interactions with the P-tRNA.

It is found in the cytoplasm. Its pathway is protein biosynthesis; polypeptide chain elongation. In terms of biological role, involved in peptide bond synthesis. Alleviates ribosome stalling that occurs when 3 or more consecutive Pro residues or the sequence PPG is present in a protein, possibly by augmenting the peptidyl transferase activity of the ribosome. Modification of Lys-34 is required for alleviation. The chain is Elongation factor P from Alkalilimnicola ehrlichii (strain ATCC BAA-1101 / DSM 17681 / MLHE-1).